The following is a 285-amino-acid chain: MPVVTMRQLLDSGVHFGHQTRRWNPKMKRFIFTERNGIYIIDLQQSLSYIDRAYEFVKETVAHGGTILFVGTKKQAQEAIAEQAGRVGMPYVNHRWLGGMLTNFSTVSKRVQRMKELEEIDFEDVAGSQFTKKELLLLNRELEKLQANLGGIRNMAKTPSAVWVVDTKKEHLAVDEAQKLGIPVVAILDTNCDPDEVAYPIPGNDDAIRSVNLLTRVVADAVAEGLIARQGGKSGQAAAEPMAEWERELLEQHNAQQAEQAEAPAAEAPAEPAEAPAAEAAPQGE.

The tract at residues 231 to 285 (GGKSGQAAAEPMAEWERELLEQHNAQQAEQAEAPAAEAPAEPAEAPAAEAAPQGE) is disordered. A compositionally biased stretch (low complexity) spans 255–285 (AQQAEQAEAPAAEAPAEPAEAPAAEAAPQGE).

It belongs to the universal ribosomal protein uS2 family.

The sequence is that of Small ribosomal subunit protein uS2 from Micrococcus luteus (strain ATCC 4698 / DSM 20030 / JCM 1464 / CCM 169 / CCUG 5858 / IAM 1056 / NBRC 3333 / NCIMB 9278 / NCTC 2665 / VKM Ac-2230) (Micrococcus lysodeikticus).